The primary structure comprises 274 residues: Ribosomal RNA small subunit methyltransferase A (274 aa).

S-adenosyl-L-methionine-binding residues include asparagine 20, leucine 22, glycine 47, glutamate 68, aspartate 90, and asparagine 110.

It belongs to the class I-like SAM-binding methyltransferase superfamily. rRNA adenine N(6)-methyltransferase family. RsmA subfamily.

It localises to the cytoplasm. The enzyme catalyses adenosine(1518)/adenosine(1519) in 16S rRNA + 4 S-adenosyl-L-methionine = N(6)-dimethyladenosine(1518)/N(6)-dimethyladenosine(1519) in 16S rRNA + 4 S-adenosyl-L-homocysteine + 4 H(+). Specifically dimethylates two adjacent adenosines (A1518 and A1519) in the loop of a conserved hairpin near the 3'-end of 16S rRNA in the 30S particle. May play a critical role in biogenesis of 30S subunits. This is Ribosomal RNA small subunit methyltransferase A from Chlorobaculum parvum (strain DSM 263 / NCIMB 8327) (Chlorobium vibrioforme subsp. thiosulfatophilum).